Consider the following 287-residue polypeptide: Succinate dehydrogenase [ubiquinone] iron-sulfur subunit, mitochondrial (287 aa).

The N-terminal 23 residues, 1-23, are a transit peptide targeting the mitochondrion; it reads MISNVLKRASVLARSNGIQSAFY. The 90-residue stretch at 51-140 folds into the 2Fe-2S ferredoxin-type domain; it reads FQVYRYNEET…GDTVKVYPLP (90 aa). [2Fe-2S] cluster is bound by residues Cys101, Cys106, Cys109, and Cys121. Residues 186-216 form the 4Fe-4S ferredoxin-type domain; sequence NRHKLDGLYECILCACCSTSCPSYWWSEGGD. Residues Cys196, Cys199, and Cys202 each contribute to the [4Fe-4S] cluster site. A [3Fe-4S] cluster-binding site is contributed by Cys206. Trp211 provides a ligand contact to a ubiquinone. 2 residues coordinate [3Fe-4S] cluster: Cys257 and Cys263. Residue Cys267 coordinates [4Fe-4S] cluster.

This sequence belongs to the succinate dehydrogenase/fumarate reductase iron-sulfur protein family. Component of complex II composed of four subunits: the flavoprotein (FP) SDHA, iron-sulfur protein (IP) SDHB, and a cytochrome b composed of a large and a small subunit. The cofactor is [2Fe-2S] cluster. Requires [3Fe-4S] cluster as cofactor. [4Fe-4S] cluster is required as a cofactor.

It localises to the mitochondrion inner membrane. The catalysed reaction is a quinone + succinate = fumarate + a quinol. It participates in carbohydrate metabolism; tricarboxylic acid cycle; fumarate from succinate (eukaryal route): step 1/1. Its function is as follows. Iron-sulfur protein (IP) subunit of succinate dehydrogenase (SDH) that is involved in complex II of the mitochondrial electron transport chain and is responsible for transferring electrons from succinate to ubiquinone (coenzyme Q). The sequence is that of Succinate dehydrogenase [ubiquinone] iron-sulfur subunit, mitochondrial (sdhB) from Dictyostelium discoideum (Social amoeba).